The following is a 375-amino-acid chain: Tyrosine--tRNA ligase (375 aa).

The L-tyrosine site is built by Y37, Y168, Q172, D175, and Q190. Positions 251-255 (KMSKS) match the 'KMSKS' region motif. Residue K254 coordinates ATP.

It belongs to the class-I aminoacyl-tRNA synthetase family. TyrS type 4 subfamily. In terms of assembly, homodimer.

The protein resides in the cytoplasm. It catalyses the reaction tRNA(Tyr) + L-tyrosine + ATP = L-tyrosyl-tRNA(Tyr) + AMP + diphosphate + H(+). Its function is as follows. Catalyzes the attachment of tyrosine to tRNA(Tyr) in a two-step reaction: tyrosine is first activated by ATP to form Tyr-AMP and then transferred to the acceptor end of tRNA(Tyr). The protein is Tyrosine--tRNA ligase of Pyrococcus horikoshii (strain ATCC 700860 / DSM 12428 / JCM 9974 / NBRC 100139 / OT-3).